The sequence spans 527 residues: MAKPWGGVGAWALDAEREDEEREHAAAFPAPDPPAAAGGAASFPSLKEAVVAGGGKQKKKKGTTLSLSEFTTYGAAGAPRRVAPAEPKGLTPQEMMMLPTGPRERSEDELDRSRGFRSYGGDREPRGGGFDDDRRSSRDSDLDMPSRADESDNWGKNKSFSPAPTDSGRRDRLSGPSPLGRSDDIDNWSRDKKPLPSRYPSLGTGGGFRESSGGGFRESSGGGFRESSGGGFRDSPGPSDSDRWVRGAVPAPMTNNGDRPRLNLNPPKRDPSATPVPAAEVARSRPSPFGAAKPREEVLAEKGLDWRKMEGEIEKKTSRPTSSHSSRPNSAHSSRPGSPGSQVSAVGSEGAPRARPKVNPFGDAKPREVVLQEKGKDWRKIDLELEHRAVNRPESEEEKNLKEEINLLKVDLKEIEAIAGDGSEQAKEVSEKISQMEKQLDLLTVELDDKIRFGQRPSSGAGRAAAFPPASEEPHVAVAHMDRPRSRGGVETYPKPVEERWGFHGSRERGSFGGGGSSDRSSTRQGW.

Disordered regions lie at residues 1–370 (MAKP…REVV) and 453–527 (FGQR…RQGW). 2 stretches are compositionally biased toward low complexity: residues 35 to 45 (AAAGGAASFPS) and 74 to 85 (GAAGAPRRVAPA). Composition is skewed to basic and acidic residues over residues 102–155 (PRER…DNWG) and 181–194 (RSDDIDNWSRDKKP). A Nuclear localization signal motif is present at residues 196 to 203 (PSRYPSLG). Gly residues predominate over residues 203–232 (GTGGGFRESSGGGFRESSGGGFRESSGGGF). Basic and acidic residues predominate over residues 293–317 (KPREEVLAEKGLDWRKMEGEIEKKT). Residues 319-336 (RPTSSHSSRPNSAHSSRP) are compositionally biased toward low complexity. Composition is skewed to basic and acidic residues over residues 472 to 485 (EEPHVAVAHMDRPR) and 496 to 510 (PVEERWGFHGSRERG). Positions 518–527 (SDRSSTRQGW) are enriched in low complexity.

The protein belongs to the eIF-4 subunit B family. In terms of assembly, homodimer. Nonspherical monomer. mRNA-discriminating component of initiation complexes. In terms of processing, phosphorylated.

Its subcellular location is the nucleus. Promotes the eIF4F and eIF4A RNA-dependent ATP-hydrolysis activity with different efficiency depending on mRNAs, thus providing mRNA discrimination during initiation of translation. In Triticum aestivum (Wheat), this protein is Eukaryotic translation initiation factor 4B1.